The primary structure comprises 361 residues: Phosphoserine aminotransferase (361 aa).

L-glutamate contacts are provided by serine 9 and arginine 42. Pyridoxal 5'-phosphate is bound by residues glycine 76 to arginine 77, tryptophan 102, threonine 153, aspartate 173, and glutamine 196. The residue at position 197 (lysine 197) is an N6-(pyridoxal phosphate)lysine. Asparagine 238–threonine 239 contributes to the pyridoxal 5'-phosphate binding site.

This sequence belongs to the class-V pyridoxal-phosphate-dependent aminotransferase family. SerC subfamily. In terms of assembly, homodimer. It depends on pyridoxal 5'-phosphate as a cofactor.

It localises to the cytoplasm. The enzyme catalyses O-phospho-L-serine + 2-oxoglutarate = 3-phosphooxypyruvate + L-glutamate. The catalysed reaction is 4-(phosphooxy)-L-threonine + 2-oxoglutarate = (R)-3-hydroxy-2-oxo-4-phosphooxybutanoate + L-glutamate. It functions in the pathway amino-acid biosynthesis; L-serine biosynthesis; L-serine from 3-phospho-D-glycerate: step 2/3. Its pathway is cofactor biosynthesis; pyridoxine 5'-phosphate biosynthesis; pyridoxine 5'-phosphate from D-erythrose 4-phosphate: step 3/5. Its function is as follows. Catalyzes the reversible conversion of 3-phosphohydroxypyruvate to phosphoserine and of 3-hydroxy-2-oxo-4-phosphonooxybutanoate to phosphohydroxythreonine. The sequence is that of Phosphoserine aminotransferase from Cronobacter sakazakii (strain ATCC BAA-894) (Enterobacter sakazakii).